We begin with the raw amino-acid sequence, 209 residues long: Kynurenine formamidase (209 aa).

Trp20 serves as a coordination point for substrate. The Zn(2+) site is built by His50, His54, and Asp56. His60 serves as the catalytic Proton donor/acceptor. Positions 161 and 173 each coordinate Zn(2+).

It belongs to the Cyclase 1 superfamily. KynB family. Homodimer. The cofactor is Zn(2+).

The catalysed reaction is N-formyl-L-kynurenine + H2O = L-kynurenine + formate + H(+). It functions in the pathway amino-acid degradation; L-tryptophan degradation via kynurenine pathway; L-kynurenine from L-tryptophan: step 2/2. Functionally, catalyzes the hydrolysis of N-formyl-L-kynurenine to L-kynurenine, the second step in the kynurenine pathway of tryptophan degradation. This Bacillus mycoides (strain KBAB4) (Bacillus weihenstephanensis) protein is Kynurenine formamidase.